The following is a 309-amino-acid chain: NAD kinase (309 aa).

The active-site Proton acceptor is Asp89. NAD(+) is bound by residues 89–90, 163–164, His174, Arg191, Asp193, and 204–209; these read DG, NE, and TAYALS.

The protein belongs to the NAD kinase family. The cofactor is a divalent metal cation.

It localises to the cytoplasm. The catalysed reaction is NAD(+) + ATP = ADP + NADP(+) + H(+). Functionally, involved in the regulation of the intracellular balance of NAD and NADP, and is a key enzyme in the biosynthesis of NADP. Catalyzes specifically the phosphorylation on 2'-hydroxyl of the adenosine moiety of NAD to yield NADP. The chain is NAD kinase from Shewanella baltica (strain OS185).